A 414-amino-acid chain; its full sequence is Serine hydroxymethyltransferase (414 aa).

(6S)-5,6,7,8-tetrahydrofolate contacts are provided by residues Leu121 and 125 to 127 (GHL). Residue Lys229 is modified to N6-(pyridoxal phosphate)lysine.

Belongs to the SHMT family. In terms of assembly, homodimer. Pyridoxal 5'-phosphate is required as a cofactor.

It is found in the cytoplasm. The enzyme catalyses (6R)-5,10-methylene-5,6,7,8-tetrahydrofolate + glycine + H2O = (6S)-5,6,7,8-tetrahydrofolate + L-serine. The protein operates within one-carbon metabolism; tetrahydrofolate interconversion. It functions in the pathway amino-acid biosynthesis; glycine biosynthesis; glycine from L-serine: step 1/1. In terms of biological role, catalyzes the reversible interconversion of serine and glycine with tetrahydrofolate (THF) serving as the one-carbon carrier. This reaction serves as the major source of one-carbon groups required for the biosynthesis of purines, thymidylate, methionine, and other important biomolecules. Also exhibits THF-independent aldolase activity toward beta-hydroxyamino acids, producing glycine and aldehydes, via a retro-aldol mechanism. The sequence is that of Serine hydroxymethyltransferase from Paracidovorax citrulli (strain AAC00-1) (Acidovorax citrulli).